The sequence spans 826 residues: Putative pentatricopeptide repeat-containing protein At1g13630 (826 aa).

16 PPR repeats span residues 228 to 262 (NEHT…DIGP), 263 to 297 (SVVS…GLVP), 298 to 332 (SVYS…GVEP), 333 to 367 (DSVT…GLSP), 368 to 402 (DVIT…GFEL), 404 to 438 (SIIP…GLSP), 439 to 473 (DLVA…RILP), 474 to 508 (NSRT…GETL), 509 to 543 (DIVL…GITP), 544 to 578 (SVAT…GLAP), 579 to 613 (SVVS…GIPP), 614 to 648 (TNVT…KCKQ), 661 to 695 (DQIT…NLDA), 696 to 730 (SSAT…NVSL), 731 to 765 (SKFA…GFNV), and 766 to 800 (SIRD…GISP).

It belongs to the PPR family. P subfamily.

The polypeptide is Putative pentatricopeptide repeat-containing protein At1g13630 (Arabidopsis thaliana (Mouse-ear cress)).